Consider the following 364-residue polypeptide: RNA-binding protein 4 (364 aa).

RRM domains lie at 2-72 (VKLF…ASKN) and 78-148 (TKLH…LSTS). Lysine 79 is covalently cross-linked (Glycyl lysine isopeptide (Lys-Gly) (interchain with G-Cter in SUMO2)). A Phosphoserine modification is found at serine 86. Residue lysine 92 forms a Glycyl lysine isopeptide (Lys-Gly) (interchain with G-Cter in SUMO2) linkage. A CCHC-type zinc finger spans residues 160–177 (SGCYRCGKEGHWSKECPI). The interaction with TNPO3 stretch occupies residues 196–364 (AVRTPYTMSY…YADRARYSAF (169 aa)). A Phosphoserine modification is found at serine 309.

Interacts with TNPO3; the interaction mediates nuclear import of the protein and is disrupted by nuclear Ran bound to GTP. Interacts with EIF4G1 and WT1. Interacts with EIF4A1; the interaction is modulated under stress-induced conditions. Interacts with AGO1. Interacts with AGO2; the interaction occurs under both cell proliferation and differentiation conditions and in an RNA- and phosphorylation-independent manner. Interacts with DDX5; the interaction occurs in an RNA-independent manner. Interacts with RBPMS; the interaction allows cooperative assembly of RNA-bound stable cell-specific alternative splicing regulatory complexes. Phosphorylated. Phosphorylated in vitro on Ser-309 by SRPK1. Phosphorylation on Ser-309 is induced upon cell stress signaling, which alters its subcellular localization and may modulate its activity on IRES-mediated mRNA translation. Phosphorylation on Ser-309 is induced upon cell muscle differentiation.

The protein localises to the nucleus. The protein resides in the nucleolus. It localises to the nucleus speckle. It is found in the cytoplasm. Its subcellular location is the cytoplasmic granule. RNA-binding factor involved in multiple aspects of cellular processes like alternative splicing of pre-mRNA and translation regulation. Modulates alternative 5'-splice site and exon selection. Acts as a muscle cell differentiation-promoting factor. Activates exon skipping of the PTB pre-mRNA during muscle cell differentiation. Antagonizes the activity of the splicing factor PTBP1 to modulate muscle cell-specific exon selection of alpha tropomyosin. Binds to intronic pyrimidine-rich sequence of the TPM1 and MAPT pre-mRNAs. Required for the translational activation of PER1 mRNA in response to circadian clock. Binds directly to the 3'-UTR of the PER1 mRNA. Exerts a suppressive activity on Cap-dependent translation via binding to CU-rich responsive elements within the 3'UTR of mRNAs, a process increased under stress conditions or during myocytes differentiation. Recruits EIF4A1 to stimulate IRES-dependent translation initiation in respons to cellular stress. Associates to internal ribosome entry segment (IRES) in target mRNA species under stress conditions. Plays a role for miRNA-guided RNA cleavage and translation suppression by promoting association of AGO2-containing miRNPs with their cognate target mRNAs. Associates with miRNAs during muscle cell differentiation. Binds preferentially to 5'-CGCGCG[GCA]-3' motif in vitro. The protein is RNA-binding protein 4 (RBM4) of Macaca fascicularis (Crab-eating macaque).